The following is a 342-amino-acid chain: Phosphoribosylformylglycinamidine cyclo-ligase (342 aa).

This sequence belongs to the AIR synthase family.

It is found in the cytoplasm. The enzyme catalyses 2-formamido-N(1)-(5-O-phospho-beta-D-ribosyl)acetamidine + ATP = 5-amino-1-(5-phospho-beta-D-ribosyl)imidazole + ADP + phosphate + H(+). The protein operates within purine metabolism; IMP biosynthesis via de novo pathway; 5-amino-1-(5-phospho-D-ribosyl)imidazole from N(2)-formyl-N(1)-(5-phospho-D-ribosyl)glycinamide: step 2/2. The polypeptide is Phosphoribosylformylglycinamidine cyclo-ligase (Staphylococcus aureus (strain bovine RF122 / ET3-1)).